The following is a 361-amino-acid chain: Chorismate synthase (361 aa).

Residues Arg48 and Arg54 each contribute to the NADP(+) site. FMN-binding positions include 125–127, 238–239, Gly278, 293–297, and Arg319; these read RSS, NA, and KPTSS.

The protein belongs to the chorismate synthase family. Homotetramer. It depends on FMNH2 as a cofactor.

The enzyme catalyses 5-O-(1-carboxyvinyl)-3-phosphoshikimate = chorismate + phosphate. It functions in the pathway metabolic intermediate biosynthesis; chorismate biosynthesis; chorismate from D-erythrose 4-phosphate and phosphoenolpyruvate: step 7/7. Its function is as follows. Catalyzes the anti-1,4-elimination of the C-3 phosphate and the C-6 proR hydrogen from 5-enolpyruvylshikimate-3-phosphate (EPSP) to yield chorismate, which is the branch point compound that serves as the starting substrate for the three terminal pathways of aromatic amino acid biosynthesis. This reaction introduces a second double bond into the aromatic ring system. The polypeptide is Chorismate synthase (Yersinia pseudotuberculosis serotype O:1b (strain IP 31758)).